We begin with the raw amino-acid sequence, 208 residues long: Cysteine-rich protein 2 (208 aa).

Residues 5–57 form the LIM zinc-binding 1 domain; the sequence is CPKCDKTVYFAEKVSSLGKDWHKFCLKCERCSKTLTPGGHAEHDGKPFCHKPC. Lys23 is modified (N6-acetyllysine). A disordered region spans residues 98–119; it reads AEERKASGPPKGPSRASSVTTF. Ser104 is subject to Phosphoserine. In terms of domain architecture, LIM zinc-binding 2 spans 126–178; it reads CPRCSKKVYFAEKVTSLGKDWHRPCLRCERCGKTLTPGGHAEHDGQPYCHKPC. An N6-acetyllysine mark is found at Lys138 and Lys144.

As to quaternary structure, interacts with TGFB1I1. Widespread tissue expression; highest levels in the heart.

The chain is Cysteine-rich protein 2 (CRIP2) from Homo sapiens (Human).